An 87-amino-acid chain; its full sequence is DNA-directed RNA polymerase subunit omega (87 aa).

This sequence belongs to the RNA polymerase subunit omega family. As to quaternary structure, the RNAP catalytic core consists of 2 alpha, 1 beta, 1 beta' and 1 omega subunit. When a sigma factor is associated with the core the holoenzyme is formed, which can initiate transcription.

It carries out the reaction RNA(n) + a ribonucleoside 5'-triphosphate = RNA(n+1) + diphosphate. In terms of biological role, promotes RNA polymerase assembly. Latches the N- and C-terminal regions of the beta' subunit thereby facilitating its interaction with the beta and alpha subunits. In Pseudomonas savastanoi pv. phaseolicola (strain 1448A / Race 6) (Pseudomonas syringae pv. phaseolicola (strain 1448A / Race 6)), this protein is DNA-directed RNA polymerase subunit omega.